Consider the following 603-residue polypeptide: Ribosome-inactivating protein PMRIPt (603 aa).

A signal peptide spans 1-39 (MRVVAGILYIVVMAICGLGIQGGTLQDYPSVYFQDSTLQ). Residues Asn-74 and Asn-168 are each glycosylated (N-linked (GlcNAc...) asparagine). The active site involves Glu-208. Intrachain disulfides connect Cys-297-Cys-335, Cys-351-Cys-370, and Cys-392-Cys-409. Ricin B-type lectin domains follow at residues 338–466 (GEPT…VGDD) and 467–593 (VEPI…WMTM). The 1-alpha repeat unit spans residues 348 to 388 (DGLCMDVRNESNNDGIPIQLWPCGAQRNQQWTFHTDGTIQS). Asn-356 and Asn-408 each carry an N-linked (GlcNAc...) asparagine glycan. The stretch at 389-430 (MGKCMTSNGYHPGDYVMIFNCSTAPVPDATKWVVSIDGSITN) is one 1-beta repeat. A 1-gamma repeat occupies 433–466 (SGLVLTAPQAAQTTILLVVRNTHSAKQGRSVGDD). The 2-alpha repeat unit spans residues 478–516 (KYMCLQGNNENNTRVWLEDCAVDRPQQWWALYSDGTIRV). Disulfide bonds link Cys-481–Cys-497 and Cys-523–Cys-540. Asn-488 is a glycosylation site (N-linked (GlcNAc...) asparagine). One copy of the 2-beta repeat lies at 520 to 558 (RSLCVTSDGHSSRDAIIILTCDGGINQRLVFNTDGTILN). One copy of the 2-gamma repeat lies at 561–597 (AQLVMDVRQSNVALRQIILYQPTGNPNQQWMTMITRT).

It belongs to the ribosome-inactivating protein family. Type 2 RIP subfamily. In terms of assembly, tetramer of four pairs of disulfide bound A-B chains. The precursor is processed in two chains, A and B, that are linked by a disulfide bond. Post-translationally, glycosylated. In terms of tissue distribution, expressed in rhizome and more abundantly in leaves (at protein level).

The enzyme catalyses Endohydrolysis of the N-glycosidic bond at one specific adenosine on the 28S rRNA.. With respect to regulation, strongly inhibited by asialofetuin and asialomucin. GalNAc-specific agglutinin. Behaves as a type-2 ribosome-inactivating protein. Inhibits mammalian ribosomes. The A chain is responsible for inhibiting protein synthesis through the catalytic inactivation of 60S ribosomal subunits by removing adenine from position 4,324 of 28S rRNA. The B chain binds to cell receptors and probably facilitates the entry into the cell of the A chain; B chains are also responsible for cell agglutination (lectin activity). Involved in plant defense against insects. Has very low cytotoxic activity against the human tumor cell lines CEM and Molt4. In Polygonatum multiflorum (Solomon's seal), this protein is Ribosome-inactivating protein PMRIPt.